The primary structure comprises 437 residues: Adenosylhomocysteinase (437 aa).

Substrate contacts are provided by threonine 54, aspartate 125, and glutamate 170. Residue 171-173 (TTT) coordinates NAD(+). Substrate is bound by residues lysine 200 and aspartate 204. NAD(+) is bound by residues asparagine 205, 234-239 (GYGWVG), glutamate 258, asparagine 293, 314-316 (AGH), and asparagine 361.

Belongs to the adenosylhomocysteinase family. NAD(+) serves as cofactor.

It is found in the cytoplasm. It carries out the reaction S-adenosyl-L-homocysteine + H2O = L-homocysteine + adenosine. It participates in amino-acid biosynthesis; L-homocysteine biosynthesis; L-homocysteine from S-adenosyl-L-homocysteine: step 1/1. Its function is as follows. May play a key role in the regulation of the intracellular concentration of adenosylhomocysteine. This chain is Adenosylhomocysteinase, found in Pyrobaculum aerophilum (strain ATCC 51768 / DSM 7523 / JCM 9630 / CIP 104966 / NBRC 100827 / IM2).